A 20-amino-acid chain; its full sequence is VVGGKPAKLGAWPWMVALGF.

This sequence belongs to the peptidase S1 family. Post-translationally, contains 3 disulfide bonds. N-glycosylated. As to expression, expressed by the venom duct.

The protein resides in the secreted. In Bombus terrestris (Buff-tailed bumblebee), this protein is Venom protease.